A 184-amino-acid chain; its full sequence is Cytosolic Prostaglandin E synthase (184 aa).

A CS domain is found at 7 to 96 (LIPPPVSWAQ…AAGPYWSSLT (90 aa)). The tract at residues 115-184 (ESDDEEGDQK…EGDKEKKPAA (70 aa)) is disordered. 5 positions are modified to phosphoserine: Ser-116, Ser-127, Ser-135, Ser-156, and Ser-162. Acidic residues predominate over residues 147-158 (FNVDDEEEDSDD). A compositionally biased stretch (basic and acidic residues) spans 175 to 184 (EGDKEKKPAA).

It belongs to the p23/wos2 family.

Its subcellular location is the cytoplasm. The enzyme catalyses prostaglandin H2 = prostaglandin E2. Cytosolic prostaglandin synthase that catalyzes the oxidoreduction of prostaglandin endoperoxide H2 (PGH2) to prostaglandin E2 (PGE2). Through production of PGE2 may regulate the activity of non-muscle myosin II in an autocrine or paracrine fashion; this may influence border cell and nurse cell stiffness to facilitate border cell migration during oogenesis. The sequence is that of Cytosolic Prostaglandin E synthase from Drosophila melanogaster (Fruit fly).